Here is a 240-residue protein sequence, read N- to C-terminus: T4 protein (240 aa).

It belongs to the poxviruses B9 family.

The protein is T4 protein of Sheeppox virus (strain InS-1) (SPPV).